The following is a 548-amino-acid chain: Formyltransferase/hydrolase complex Fhc subunit A (548 aa).

The Zn(2+) site is built by H57, H59, and H227.

This sequence belongs to the metallo-dependent hydrolases superfamily. FwdA/FmdA family. As to quaternary structure, octaheteromer. Part of the formyltransferase/hydrolase complex fhc; composed of FhcA, FhcB, FhcC and FhcD. The cofactor is Zn(2+).

The protein resides in the cytoplasm. The enzyme catalyses N-formylmethanofuran + H2O = methanofuran + formate. It participates in one-carbon metabolism; formaldehyde degradation; formate from formaldehyde (H(4)MPT route): step 4/5. Its function is as follows. Involved in the transformation of 5-formyl tetrahydromethanopterin (5-formyl-H(4)MPT) to methanofuran (MFR) and formate via the formylmethanofuran (formyl-MFR). May be catalyze the hydrolysis of formylmethanofuran (formyl-MFR) to yield formate and MFR. This is Formyltransferase/hydrolase complex Fhc subunit A (fhcA) from Methylorubrum extorquens (strain ATCC 14718 / DSM 1338 / JCM 2805 / NCIMB 9133 / AM1) (Methylobacterium extorquens).